Reading from the N-terminus, the 861-residue chain is Isoleucine--tRNA ligase (861 aa).

A 'HIGH' region motif is present at residues 57–67 (PYANGNIHVGH). Position 549 (Glu-549) interacts with L-isoleucyl-5'-AMP. Positions 590–594 (KMSKS) match the 'KMSKS' region motif. Lys-593 serves as a coordination point for ATP.

The protein belongs to the class-I aminoacyl-tRNA synthetase family. IleS type 1 subfamily. Monomer.

Its subcellular location is the cytoplasm. It carries out the reaction tRNA(Ile) + L-isoleucine + ATP = L-isoleucyl-tRNA(Ile) + AMP + diphosphate. Its function is as follows. Catalyzes the attachment of isoleucine to tRNA(Ile). As IleRS can inadvertently accommodate and process structurally similar amino acids such as valine, to avoid such errors it has two additional distinct tRNA(Ile)-dependent editing activities. One activity is designated as 'pretransfer' editing and involves the hydrolysis of activated Val-AMP. The other activity is designated 'posttransfer' editing and involves deacylation of mischarged Val-tRNA(Ile). This Mycoplasma pneumoniae (strain ATCC 29342 / M129 / Subtype 1) (Mycoplasmoides pneumoniae) protein is Isoleucine--tRNA ligase.